A 380-amino-acid chain; its full sequence is Chromo domain-containing protein 2 (380 aa).

Disordered regions lie at residues 14–58 and 100–156; these read ISES…SLYG and KLSP…VPLN. Over residues 33 to 52 the composition is skewed to polar residues; the sequence is NSINNKSSTASLESPQNGSW. The segment covering 108–119 has biased composition (acidic residues); that stretch reads EDSEDKKEEDES. Positions 121–140 are enriched in low complexity; the sequence is SYKNEFKSSSSASVSSNFEK. A Chromo domain is found at 176-238; the sequence is FAVEMILDSR…SRGGKPDLSS (63 aa). A disordered region spans residues 250 to 273; that stretch reads SNEASYVEKDESSNSDDSISYKRR.

It is found in the nucleus. In terms of biological role, component of the kinetochore which plays a role in stabilizing microtubules and so allowing accurate chromosome segregation. The polypeptide is Chromo domain-containing protein 2 (chp2) (Schizosaccharomyces pombe (strain 972 / ATCC 24843) (Fission yeast)).